Reading from the N-terminus, the 25-residue chain is Retinol-binding protein 3 (25 aa).

It localises to the secreted. The protein localises to the extracellular space. It is found in the extracellular matrix. Its subcellular location is the interphotoreceptor matrix. In terms of biological role, IRBP shuttles 11-cis and all trans retinoids between the retinol isomerase in the pigment epithelium and the visual pigments in the photoreceptor cells of the retina. The polypeptide is Retinol-binding protein 3 (RBP3) (Sus scrofa (Pig)).